The primary structure comprises 529 residues: Ell-associated factor Eaf (529 aa).

Disordered regions lie at residues 155 to 235 (AAGS…PMIT) and 253 to 529 (ANIS…DDDD). Residues 167 to 186 (ENSTMRISSKTKVSTGSRRN) show a composition bias toward polar residues. 4 stretches are compositionally biased toward low complexity: residues 194–215 (RNSPMQQSSPSRPVVSHRSPQS), 256–265 (SGSSTGSSSG), 306–315 (HQNQQQQQQN), and 327–346 (QQQHQQQMQQQQQQHQQQQQ). Ser-196 carries the phosphoserine modification. Over residues 347-359 (RASFSHSNHSNSM) the composition is skewed to polar residues. Positions 401–416 (DSSDTDSGSDSDDSTD) are enriched in acidic residues. 4 stretches are compositionally biased toward low complexity: residues 431 to 451 (HQQQHHQMQQQHQQQQQHMHQ), 469 to 480 (QHQQQQQQPPQQ), 488 to 499 (QQQQQQQQQQQS), and 510 to 523 (NDLLQNDLQLSSNS).

Belongs to the EAF family.

It localises to the nucleus. Promotes transcriptional elongation by Su(Tpl)/ELL. Essential for development. In Drosophila grimshawi (Hawaiian fruit fly), this protein is Ell-associated factor Eaf.